The sequence spans 66 residues: uncharacterized protein (66 aa).

This is an uncharacterized protein from Methanocaldococcus jannaschii (strain ATCC 43067 / DSM 2661 / JAL-1 / JCM 10045 / NBRC 100440) (Methanococcus jannaschii).